The chain runs to 653 residues: MNDVTTETYETLKQSVLHTFAQLTGYNVSELSLTSHLENDLGVDSIALAEIAVSLSRQFQLNTPLLIQDINTIKDALDGILQREFQLSEKVEPAAIALSGDADLWLGNLVRQIFASHSGYDVNALALDAEIESDLGIDSVSVASAQGELFNTLQLNSETIIANCNTLSALKQCLAARLVQEKGQDWFEQRGRGQSDSAIDHDADTTAEVTPPTATPVAINAEIGDPRTMRDFVGIEHPDIFHKAREFHLFYQDKKKRQLYFYGMPLETPCKNRAVMFDEATGQHREFLMFGSNSYLGLSNHPEIIHAIQDAASLYGATNTGCRIIAGSNVLHLELERKLAKLKGRDDCIVYPSGYSANLGCISALTSRHDLVFTDAINHMSIQDGCKLAGAQRKIYNHSLTSLEKSLAKYADHPGGKLIVTDGVFSMHGDIVDLPRLMKLAERYGARVLVDDAHSTGVLGKTGAGTSEHFNMKGQVDLELGTMSKALSGLGGYVCGDGDVVEYLRFYSNSYVFAATIPAPVAAGVIASIDVMLREPERLAKLWDNIYYFRTRLLNAGFDLENSDSAIIPIVVGDDAKTLFFGRAVRARGMFCQTVVFPGVSVGDARLRISITSEHTREDLDEAYAILVASALEVGVPVNASAHQEENASVAEA.

The region spanning 7–84 is the Carrier domain; the sequence is ETYETLKQSV…DALDGILQRE (78 aa). Ser-45 bears the O-(pantetheine 4'-phosphoryl)serine mark. 354–355 is a pyridoxal 5'-phosphate binding site; that stretch reads GY. Residue His-379 participates in substrate binding. Pyridoxal 5'-phosphate is bound by residues Ser-426, His-454, and Thr-482. The residue at position 485 (Lys-485) is an N6-(pyridoxal phosphate)lysine. Residues 512 to 532 traverse the membrane as a helical segment; it reads VFAATIPAPVAAGVIASIDVM.

The cofactor is pyridoxal 5'-phosphate.

The protein localises to the membrane. The protein operates within antibiotic biosynthesis; prodigiosin biosynthesis. Its function is as follows. Involved in the biosynthesis of 4-methoxy-2,2'-bipyrrole-5-carbaldehyde (MBC), one of the terminal products involved in the biosynthesis of the red antibiotic prodigiosin (Pig). Carrier of the L-malonyl group (malonyl-S-PigH), which is decarboxylated by PigJ to yield a C2 carbanion acetyl-S-PigH. Then the pyrrolyl group of pyrrolyl-S-cysteinyl PigJ intermediate is captured by the C2 carbanion acetyl-S-PigH to yield the pyrrolyl-beta-ketoacyl-S-PigH. In the last step, PigH catalyzes the decarboxylative condensation between the pyrrolyl-beta-ketoacyl (pyrrolyl-beta-ketoacyl-S-PigH) and L-serine to yield 4-hydroxy-2,2'-bipyrrole-5-methanol (HBM). In Serratia sp. (strain ATCC 39006) (Prodigiosinella confusarubida), this protein is 4-hydroxy-2,2'-bipyrrole-5-methanol synthase PigH.